The primary structure comprises 172 residues: Large ribosomal subunit protein uL10 (172 aa).

Belongs to the universal ribosomal protein uL10 family. Part of the ribosomal stalk of the 50S ribosomal subunit. The N-terminus interacts with L11 and the large rRNA to form the base of the stalk. The C-terminus forms an elongated spine to which L12 dimers bind in a sequential fashion forming a multimeric L10(L12)X complex.

In terms of biological role, forms part of the ribosomal stalk, playing a central role in the interaction of the ribosome with GTP-bound translation factors. This is Large ribosomal subunit protein uL10 from Parvibaculum lavamentivorans (strain DS-1 / DSM 13023 / NCIMB 13966).